We begin with the raw amino-acid sequence, 299 residues long: Protein bem46 (299 aa).

Residues 15-32 form a helical membrane-spanning segment; it reads YSGMASLAVTLIALGFLY.

It belongs to the serine esterase family.

It localises to the membrane. In terms of biological role, suppressor of bem1/bud5. This chain is Protein bem46 (bem46), found in Schizosaccharomyces pombe (strain 972 / ATCC 24843) (Fission yeast).